Here is a 146-residue protein sequence, read N- to C-terminus: Antirestriction protein KlcA (146 aa).

It belongs to the antirestriction protein family.

Functionally, could be involved in overcoming restriction barriers during establishment after conjugative transfer. This is Antirestriction protein KlcA (klcA) from Escherichia coli.